The sequence spans 117 residues: Probable non-functional immunoglobulin heavy variable 1-38-4 (117 aa).

The signal sequence occupies residues 1–19 (MDWNWRILFLVVATTGAHS). A framework-1 region spans residues 20–44 (QVQLVQSWAEVRKSGASVKVSCSFS). Residues 20–117 (QVQLVQSWAE…EDMAVYYYAR (98 aa)) form the Ig-like domain. Positions 45-52 (GFTITSYG) are complementarity-determining-1. The segment at 53 to 69 (IHWVQQSPGQGLEWMGW) is framework-2. The tract at residues 70–77 (INPGNGSP) is complementarity-determining-2. N-linked (GlcNAc...) asparagine glycosylation occurs at Asn74. A framework-3 region spans residues 78-115 (SYAKKFQGRFTMTRDMSTTTAYTDLSSLTSEDMAVYYY). A complementarity-determining-3 region spans residues 116–117 (AR).

In terms of assembly, most probably, the immunoglobulin is not assembled due to incorrect folding of heavy chain. Immunoglobulins are composed of two identical heavy chains and two identical light chains; disulfide-linked.

The protein resides in the secreted. Its subcellular location is the cell membrane. In terms of biological role, probable non-functional open reading frame (ORF) of V region of the variable domain of immunoglobulin heavy chains. Non-functional ORF generally cannot participate in the synthesis of a productive immunoglobulin chain due to altered V-(D)-J or switch recombination and/or splicing site (at mRNA level) and/or conserved amino acid change (protein level). Immunoglobulins, also known as antibodies, are membrane-bound or secreted glycoproteins produced by B lymphocytes. In the recognition phase of humoral immunity, the membrane-bound immunoglobulins serve as receptors which, upon binding of a specific antigen, trigger the clonal expansion and differentiation of B lymphocytes into immunoglobulins-secreting plasma cells. Secreted immunoglobulins mediate the effector phase of humoral immunity, which results in the elimination of bound antigens. The antigen binding site is formed by the variable domain of one heavy chain, together with that of its associated light chain. Thus, each immunoglobulin has two antigen binding sites with remarkable affinity for a particular antigen. The variable domains are assembled by a process called V-(D)-J rearrangement and can then be subjected to somatic hypermutations which, after exposure to antigen and selection, allow affinity maturation for a particular antigen. The polypeptide is Probable non-functional immunoglobulin heavy variable 1-38-4 (Homo sapiens (Human)).